The sequence spans 146 residues: Large ribosomal subunit protein uL15 (146 aa).

A disordered region spans residues 1–59 (MRLEELKAPAGANKRTKRVGRGTGSGHGKTSTRGHKGQKSRSGGGVRPGFEGGQMPLQR). Residues 30 to 39 (TSTRGHKGQK) show a composition bias toward basic residues. Residues 42 to 52 (SGGGVRPGFEG) are compositionally biased toward gly residues.

Belongs to the universal ribosomal protein uL15 family. In terms of assembly, part of the 50S ribosomal subunit.

Functionally, binds to the 23S rRNA. The protein is Large ribosomal subunit protein uL15 of Syntrophomonas wolfei subsp. wolfei (strain DSM 2245B / Goettingen).